Here is a 617-residue protein sequence, read N- to C-terminus: V-type proton ATPase catalytic subunit A (617 aa).

Thr136 bears the Phosphothreonine mark. Residue 250–257 (GAFGCGKT) participates in ATP binding. Ser384 carries the post-translational modification Phosphoserine; by AMPK.

The protein belongs to the ATPase alpha/beta chains family. In terms of assembly, V-ATPase is a heteromultimeric enzyme made up of two complexes: the ATP-hydrolytic V1 complex and the proton translocation V0 complex. The V1 complex consists of three catalytic AB heterodimers that form a heterohexamer, three peripheral stalks each consisting of EG heterodimers, one central rotor including subunits D and F, and the regulatory subunits C and H. The proton translocation complex V0 consists of the proton transport subunit a, a ring of proteolipid subunits c9c'', rotary subunit d, subunits e and f, and the accessory subunits ATP6AP1/Ac45 and ATP6AP2/PRR. Interacts with the V0 complex V-ATPase subunit a4 ATP6V0A4. Interacts with WFS1. Interacts with alpha-crystallin B chain/CRYAB and with MTOR, forming a ternary complex. Phosphorylation at Ser-384 by AMPK down-regulates its enzyme activity.

The protein localises to the cytoplasm. The protein resides in the cytosol. Its subcellular location is the cytoplasmic vesicle. It is found in the secretory vesicle. It localises to the clathrin-coated vesicle membrane. The protein localises to the lysosome. It catalyses the reaction ATP + H2O + 4 H(+)(in) = ADP + phosphate + 5 H(+)(out). Its activity is regulated as follows. ATP hydrolysis occurs at the interface between the nucleotide-binding domains of subunits A and B. ATP hydrolysis triggers a conformational change in the subunits D and F, which induces a shift of subunit d. The c-ring is subsequently rotated and results in a continuous proton translocation across the membrane. Functionally, catalytic subunit of the V1 complex of vacuolar(H+)-ATPase (V-ATPase), a multisubunit enzyme composed of a peripheral complex (V1) that hydrolyzes ATP and a membrane integral complex (V0) that translocates protons. V-ATPase is responsible for acidifying and maintaining the pH of intracellular compartments and in some cell types, is targeted to the plasma membrane, where it is responsible for acidifying the extracellular environment. In aerobic conditions, involved in intracellular iron homeostasis, thus triggering the activity of Fe(2+) prolyl hydroxylase (PHD) enzymes, and leading to HIF1A hydroxylation and subsequent proteasomal degradation. May play a role in neurite development and synaptic connectivity. In Pongo abelii (Sumatran orangutan), this protein is V-type proton ATPase catalytic subunit A (ATP6V1A).